Consider the following 331-residue polypeptide: Serine/threonine-protein phosphatase 6 catalytic subunit (331 aa).

The Mn(2+) site is built by Asp79, His81, Asp107, and Asn139. Residue His140 is the Proton donor of the active site. Mn(2+) contacts are provided by His189 and His264.

This sequence belongs to the PPP phosphatase family. PP-6 (PP-V) subfamily. In terms of assembly, forms a complex composed of catalytic subunit pph-6 and regulatory subunit saps-1; the interaction increases pph-6 and saps-1 protein stability. Mn(2+) serves as cofactor.

The protein localises to the cytoplasm. It localises to the cell cortex. It is found in the cytoskeleton. Its subcellular location is the spindle pole. It catalyses the reaction O-phospho-L-seryl-[protein] + H2O = L-seryl-[protein] + phosphate. The enzyme catalyses O-phospho-L-threonyl-[protein] + H2O = L-threonyl-[protein] + phosphate. Catalytic subunit of protein phosphatase 6 (PP6). In complex with saps-1, promotes actomyosin contractility during cytokinesis by regulating the organization of cortical non-muscle myosin II nmy-2 and thus contributing to correct spindle positioning. Also required for the proper generation of pulling forces on spindle poles during anaphase by regulating the cortical localization of gpr-1, gpr-2 and lin-5. This Caenorhabditis elegans protein is Serine/threonine-protein phosphatase 6 catalytic subunit.